A 246-amino-acid polypeptide reads, in one-letter code: tRNA (guanine-N(1)-)-methyltransferase (246 aa).

S-adenosyl-L-methionine is bound by residues glycine 113 and 132-137; that span reads LGDYVL.

Belongs to the RNA methyltransferase TrmD family. In terms of assembly, homodimer.

It localises to the cytoplasm. It catalyses the reaction guanosine(37) in tRNA + S-adenosyl-L-methionine = N(1)-methylguanosine(37) in tRNA + S-adenosyl-L-homocysteine + H(+). In terms of biological role, specifically methylates guanosine-37 in various tRNAs. The polypeptide is tRNA (guanine-N(1)-)-methyltransferase (Lactiplantibacillus plantarum (strain ATCC BAA-793 / NCIMB 8826 / WCFS1) (Lactobacillus plantarum)).